We begin with the raw amino-acid sequence, 277 residues long: Ribosomal RNA small subunit methyltransferase A (277 aa).

Asparagine 27, leucine 29, glycine 54, glutamate 75, aspartate 95, and asparagine 118 together coordinate S-adenosyl-L-methionine.

Belongs to the class I-like SAM-binding methyltransferase superfamily. rRNA adenine N(6)-methyltransferase family. RsmA subfamily.

It is found in the cytoplasm. It carries out the reaction adenosine(1518)/adenosine(1519) in 16S rRNA + 4 S-adenosyl-L-methionine = N(6)-dimethyladenosine(1518)/N(6)-dimethyladenosine(1519) in 16S rRNA + 4 S-adenosyl-L-homocysteine + 4 H(+). Specifically dimethylates two adjacent adenosines (A1518 and A1519) in the loop of a conserved hairpin near the 3'-end of 16S rRNA in the 30S particle. May play a critical role in biogenesis of 30S subunits. The polypeptide is Ribosomal RNA small subunit methyltransferase A (Chlamydia trachomatis serovar L2 (strain ATCC VR-902B / DSM 19102 / 434/Bu)).